A 128-amino-acid chain; its full sequence is Large ribosomal subunit protein bL17 (128 aa).

It belongs to the bacterial ribosomal protein bL17 family. As to quaternary structure, part of the 50S ribosomal subunit. Contacts protein L32.

The chain is Large ribosomal subunit protein bL17 from Pseudomonas syringae pv. syringae (strain B728a).